Consider the following 703-residue polypeptide: RING finger protein 214 (703 aa).

Disordered regions lie at residues 1–59 (MAAS…TITK), 104–134 (GSQSDLKDVASTAGEEGDTSLRESLHPVTRS), and 146–197 (SRNC…SSSL). The residue at position 2 (Ala2) is an N-acetylalanine. Residues Ser15, Ser40, Ser47, and Ser54 each carry the phosphoserine modification. Over residues 37 to 59 (TKDSAQKQKNSPLLSVSSQTITK) the composition is skewed to polar residues. Residues Ser176 and Ser196 each carry the phosphoserine modification. A coiled-coil region spans residues 220–379 (QDIEKNLDKM…AEKEAELHLT (160 aa)). A disordered region spans residues 486–552 (FPILNPALSQ…SAETPRPQPV (67 aa)). The segment covering 493 to 504 (LSQPSQPSSPLP) has biased composition (low complexity). Phosphoserine is present on residues Ser497, Ser511, and Ser516. Over residues 523–536 (PHMPPAASIPPPPG) the composition is skewed to pro residues. The RING-type; atypical zinc finger occupies 658 to 700 (CLMCQKLVQPSELHPMACTHVLHKECIKFWAQTNTNDTCPFCP).

This chain is RING finger protein 214 (RNF214), found in Homo sapiens (Human).